We begin with the raw amino-acid sequence, 509 residues long: Maturase K (509 aa).

The protein belongs to the intron maturase 2 family. MatK subfamily.

It localises to the plastid. Its subcellular location is the chloroplast. Functionally, usually encoded in the trnK tRNA gene intron. Probably assists in splicing its own and other chloroplast group II introns. The protein is Maturase K of Solanum tuberosum (Potato).